Here is a 151-residue protein sequence, read N- to C-terminus: Sperm surface protein Sp17 (151 aa).

Disordered regions lie at residues 56-115 and 127-151; these read DPAE…EKEE and GHIA…EENK. Residues 62–98 are compositionally biased toward basic and acidic residues; it reads SKVEDRFYNNHAFEEQEPPEKSDPKQEESQISGKEEE. Residues 114–143 enclose the IQ domain; the sequence is EEVAAVKIQAAFRGHIAREEAKKMKTNSLQ.

As to quaternary structure, homodimer. May interact with ROPN1. As to expression, testis and sperm specific.

It localises to the membrane. In terms of biological role, sperm surface zona pellucida binding protein. Helps to bind spermatozoa to the zona pellucida with high affinity. Might function in binding zona pellucida and carbohydrates. This Homo sapiens (Human) protein is Sperm surface protein Sp17 (SPA17).